Consider the following 955-residue polypeptide: Reversion-inducing cysteine-rich protein with Kazal motifs (955 aa).

The first 22 residues, 1–22 (MSGCLQILTVLLCCRFWALVFS), serve as a signal peptide directing secretion. The Knot 1 repeat unit spans residues 28–75 (CVHHAADIPRCRDACEQLASIRSESRLRHLLHRLPSYCPETLSELWIC). A 5 X Knot repeats region spans residues 28 to 326 (CVHHAADIPR…NPVEMDLITC (299 aa)). The N-linked (GlcNAc...) asparagine glycan is linked to asparagine 77. Knot repeat units lie at residues 95-132 (CCELAISAECRRDCKQASSKNDISKVCKKDTENPLYSC) and 142-188 (CCSY…LILC). Asparagine 191 carries an N-linked (GlcNAc...) asparagine glycan. 2 Knot repeats span residues 207–254 (CCDR…LWQC) and 282–326 (CCFK…LITC). N-linked (GlcNAc...) asparagine glycosylation is found at asparagine 287 and asparagine 375. 3 consecutive Kazal-like domains span residues 615-661 (LFTG…SCRS), 686-741 (DLSE…HCQD), and 742-778 (ACRRPREVCAHNGESYSTVCEAFSERVAVDYQGRCHA). Intrachain disulfides connect cysteine 621-cysteine 646, cysteine 623-cysteine 642, cysteine 631-cysteine 659, cysteine 704-cysteine 724, and cysteine 713-cysteine 739. Serine 931 carries GPI-anchor amidated serine lipidation. The propeptide occupies 932-955 (SCVSISVCVLLLLCSLILTLTSDL).

The protein belongs to the RECK family. As to quaternary structure, interacts (via knot repeats) with wnt7a (via disordered linker region); the interaction is direct. Interacts (via knot repeats) with wnt7b (via disordered linker region); the interaction is direct. Interacts with adgra2; the interaction is direct. As to expression, expressed in the cerebral endothelium.

Its subcellular location is the cell membrane. In terms of biological role, functions together with adgra2 to enable brain endothelial cells to selectively respond to Wnt7 signals (wnt7a or wnt7b). Plays a key role in Wnt7-specific responses: required for central nervous system (CNS) angiogenesis and blood-brain barrier regulation. Acts as a Wnt7-specific coactivator of canonical Wnt signaling by decoding Wnt ligands: acts by interacting specifically with the disordered linker region of Wnt7, thereby conferring ligand selectivity for Wnt7. Adgra2 is then required to deliver reck-bound Wnt7 to frizzled by assembling a higher-order RECK-ADGRA2-Fzd-LRP5-LRP6 complex. Also acts as a serine protease inhibitor. In Danio rerio (Zebrafish), this protein is Reversion-inducing cysteine-rich protein with Kazal motifs.